The chain runs to 1201 residues: HEAT repeat-containing protein 6 (1201 aa).

The disordered stretch occupies residues Met1–Ser25. One copy of the HEAT 1 repeat lies at Pro182–Ser221. The segment at Ala321–Ser390 is disordered. A compositionally biased stretch (basic residues) spans Gln341 to Lys352. Residues Ser375 to Ser390 show a composition bias toward polar residues. 3 HEAT repeats span residues Gly460 to Gln498, Ser523 to Tyr560, and Gly566 to Pro603. The span at Ser618–Ser633 shows a compositional bias: polar residues. The tract at residues Ser618 to Pro653 is disordered.

In Danio rerio (Zebrafish), this protein is HEAT repeat-containing protein 6 (heatr6).